The sequence spans 334 residues: Immune-associated nucleotide-binding protein 3 (334 aa).

The AIG1-type G domain occupies 11–219 (KAVKNIVLVG…FRGKMYLEIK (209 aa)). Residues 20–27 (GRTGNGKS) are G1. Residues 20–28 (GRTGNGKSA) and Ser-41 contribute to the GTP site. Residues 47–51 (GVTKT) form a G2 region. Residues 69–72 (DTPG) form a G3 region. The interval 139–142 (TGGD) is G4. The tract at residues 178–180 (NNM) is G5. Asn-179 lines the GTP pocket. The stretch at 272-306 (SAAHERMVSMLNENLENAHRENIDLRKAHDHEQKK) forms a coiled coil.

Belongs to the TRAFAC class TrmE-Era-EngA-EngB-Septin-like GTPase superfamily. AIG1/Toc34/Toc159-like paraseptin GTPase family. IAN subfamily. As to expression, mostly expressed in pollen. Also detected in lateral roots and radicles.

The sequence is that of Immune-associated nucleotide-binding protein 3 from Arabidopsis thaliana (Mouse-ear cress).